Here is a 35-residue protein sequence, read N- to C-terminus: Sperm protamine alpha isoform 2 (35 aa).

A disordered region spans residues 1–35; the sequence is MPRRRRRASRPIRRRRRARRSTAVRRRRRVVRRRR. Serine 9 and serine 21 each carry phosphoserine.

Phosphorylated in immature sperm. Dephosphorylated in mature sperm allowing a stronger interaction with DNA. Gonads.

It is found in the nucleus. The protein resides in the chromosome. In terms of biological role, protamines substitute for histones in the chromatin of sperm during the haploid phase of spermatogenesis. They compact sperm DNA into a highly condensed, stable and inactive complex. This is Sperm protamine alpha isoform 2 from Scomber scombrus (Atlantic mackerel).